The following is a 120-amino-acid chain: Dynein 11 kDa light chain, flagellar outer arm (120 aa).

Belongs to the dynein light chain family. Consists of at least 3 heavy chains (alpha, beta and gamma), 2 intermediate chains and 8 light chains.

It is found in the cytoplasm. The protein localises to the cytoskeleton. Its subcellular location is the flagellum axoneme. This chain is Dynein 11 kDa light chain, flagellar outer arm, found in Chlamydomonas reinhardtii (Chlamydomonas smithii).